A 351-amino-acid chain; its full sequence is Protein-glutamate methylesterase/protein-glutamine glutaminase 2 (351 aa).

The Response regulatory domain occupies 4–121; it reads KVLVVDDSAL…PQDFNEYQDL (118 aa). At Asp-55 the chain carries 4-aspartylphosphate. The CheB-type methylesterase domain occupies 156-348; that stretch reads RVINTQLVAI…DKMLNYLASL (193 aa). Active-site residues include Ser-168, His-194, and Asp-290.

Belongs to the CheB family. Phosphorylated by CheA. Phosphorylation of the N-terminal regulatory domain activates the methylesterase activity.

It localises to the cytoplasm. The enzyme catalyses [protein]-L-glutamate 5-O-methyl ester + H2O = L-glutamyl-[protein] + methanol + H(+). It catalyses the reaction L-glutaminyl-[protein] + H2O = L-glutamyl-[protein] + NH4(+). Involved in chemotaxis. Part of a chemotaxis signal transduction system that modulates chemotaxis in response to various stimuli. Catalyzes the demethylation of specific methylglutamate residues introduced into the chemoreceptors (methyl-accepting chemotaxis proteins or MCP) by CheR. Also mediates the irreversible deamidation of specific glutamine residues to glutamic acid. This is Protein-glutamate methylesterase/protein-glutamine glutaminase 2 from Shewanella sp. (strain MR-4).